Consider the following 631-residue polypeptide: Phosphomethylpyrimidine synthase (631 aa).

Residues Asn-239, Met-268, Tyr-297, His-333, 353–355, 394–397, and Glu-433 each bind substrate; these read SRG and DGLR. Residue His-437 participates in Zn(2+) binding. Position 460 (Tyr-460) interacts with substrate. His-501 is a Zn(2+) binding site. [4Fe-4S] cluster contacts are provided by Cys-581, Cys-584, and Cys-589.

This sequence belongs to the ThiC family. Homodimer. [4Fe-4S] cluster serves as cofactor.

The catalysed reaction is 5-amino-1-(5-phospho-beta-D-ribosyl)imidazole + S-adenosyl-L-methionine = 4-amino-2-methyl-5-(phosphooxymethyl)pyrimidine + CO + 5'-deoxyadenosine + formate + L-methionine + 3 H(+). It functions in the pathway cofactor biosynthesis; thiamine diphosphate biosynthesis. Its function is as follows. Catalyzes the synthesis of the hydroxymethylpyrimidine phosphate (HMP-P) moiety of thiamine from aminoimidazole ribotide (AIR) in a radical S-adenosyl-L-methionine (SAM)-dependent reaction. In Salmonella heidelberg (strain SL476), this protein is Phosphomethylpyrimidine synthase.